Consider the following 1013-residue polypeptide: Retinoblastoma-related protein 1 (1013 aa).

Residues 406 to 607 are domain A; that stretch reads TPVSTAMTTA…EKGSSMYNSL (202 aa). The pocket stretch occupies residues 406-858; the sequence is TPVSTAMTTA…NEIFIPAVKP (453 aa). Positions 608-727 are spacer; it reads IVARPSLALE…PGGGGETCAE (120 aa). Positions 728–858 are domain B; sequence TGINIFFTKI…NEIFIPAVKP (131 aa). Ser-885 and Ser-898 each carry phosphoserine. Residues 979–1013 form a disordered region; the sequence is VANSLNLQNQNQNQNGSDASSSGGAAPLKTEPTDS. Residues 980-1004 are compositionally biased toward low complexity; the sequence is ANSLNLQNQNQNQNGSDASSSGGAA.

It belongs to the retinoblastoma protein (RB) family. As to quaternary structure, interacts with the begomovirus replication-associated protein (Rep), the nanovirus Clink protein, the mastrevirus RepA protein, E2FA, E2FB and E2FC. Interacts with MSI1 through its Domain A. Interacts with ATPK1/S6K1. Interacts with SCR. Interacts with HAT2. Interacts with FAMA. Interacts with MYB124 and MYB88. Component of a DREAM-like complex which modulates a variety of developmentally regulated genes and of the mitotic genes in proliferating and differentiated cells. Associates with MYB3R3 in both earlier and later stages of leaves development. Interacts with MYB3R4 only at early stages of leaves development. Highly phosphorylated by CDKA-1 during G1 to S phase transition. Once hyper-phosphorylated, becomes inactive and unable to interact with E2F. In terms of processing, ubiquitinated. Subject to proteasome-dependent degradation during sucrose starvation. Expressed in actively dividing cells. Detected in the shoot apical meristem, in young leaf primordia and in both sporophytic tissue and the megagametophyte.

It is found in the nucleus. Its function is as follows. Key regulator of entry into cell division. Acts as a transcription repressor of E2F target genes, whose activity is required for progress from the G1 to the S phase of the cell cycle. Hyperphosphorylation by CDKA-1 prevents the binding to E2F transcription factors, allowing G1 to S phase transition to operate. Forms a stable complex with E2FA that functions in maintaining cell proliferation through repression of cell differentiation. Plays a central role in the mechanism controlling meristem cell differentiation, cell fate establishment and cell fate maintenance during organogenesis and gametogenesis. Required during lateral organ production. Also involved in controlling asymmetric divisions of stem cells in different stem cell niches. Acts as a negative regulator of cell proliferation during leaf and gametophytes development. At later stages of development, restricts the progression through additional endocycles. In the leaf, plays a role in the control of the mesophyll differentiation. Another role is its implication in the regulation of imprinted genes. Acts together with MSI1 to repress the expression of MET1 during gametogenesis. This in turn activates expression of the imprinted genes FIS2 and FWA. Regulates many genes of the polycomb repressive complex 2 (PRC2). Plays an important role in meiosis affecting different aspects of this complex process. Functions as a positive regulator of the developmental switch from embryonic heterotrophic growth to autotrophic growth. Interaction with mastrevirus RepA or nanovirus Clink protein disrupts the RBR/E2F interaction and releases the transcription of replicative enzymes needed by the virus by increasing the E2F DNA-binding activity. The sequence is that of Retinoblastoma-related protein 1 (RBR1) from Arabidopsis thaliana (Mouse-ear cress).